The sequence spans 486 residues: Glycogen synthase 2 (486 aa).

Lysine 15 provides a ligand contact to ADP-alpha-D-glucose.

The protein belongs to the glycosyltransferase 1 family. Bacterial/plant glycogen synthase subfamily.

The catalysed reaction is [(1-&gt;4)-alpha-D-glucosyl](n) + ADP-alpha-D-glucose = [(1-&gt;4)-alpha-D-glucosyl](n+1) + ADP + H(+). The protein operates within glycan biosynthesis; glycogen biosynthesis. Synthesizes alpha-1,4-glucan chains using ADP-glucose. This Rhizobium meliloti (strain 1021) (Ensifer meliloti) protein is Glycogen synthase 2 (glgA2).